The following is a 479-amino-acid chain: MNFETVIGLEIHAELKSKTKIFCSCSTKFGAEPNANTCPICTGVPGTLPVLNEEVVNLAIKAGTALGCTINKYNKMDRKNYFYPDLPKNYQTSQFDMPICSGGLVEFEHEGKEVKVRLNRIHIEEDAGKLVHVEGEPISLVDYNRVGVPLAEIVTEPDLRSVSEAVAFMKKLKSILEYGEISDCRMEQGSLRCDANISLRPVGQKEFGLRVELKNINSFRELQKALEKEERRQRELYTYGEGHKIVQETRRWDAAKGKTIPMRSKEEADDYRYVVEPDLPPIIIYDEQIETITKSLPEMPDEKKERFLTAYELSEKEVDILIGDKGLATFFEKVVELGATPKIASNWILGDILRILNDRKIESEDMHIEAENFAKLLKVVEEGKISNNVGREVLDEIFDENKDPMKVIEEKGLMQISSSDELEKIVAEVIANNPQSVEDFKAGKTQSAGFLMGQVMKLSKGKANPKVAKELVDKKLSEI.

It belongs to the GatB/GatE family. GatB subfamily. As to quaternary structure, heterotrimer of A, B and C subunits.

It catalyses the reaction L-glutamyl-tRNA(Gln) + L-glutamine + ATP + H2O = L-glutaminyl-tRNA(Gln) + L-glutamate + ADP + phosphate + H(+). The enzyme catalyses L-aspartyl-tRNA(Asn) + L-glutamine + ATP + H2O = L-asparaginyl-tRNA(Asn) + L-glutamate + ADP + phosphate + 2 H(+). Allows the formation of correctly charged Asn-tRNA(Asn) or Gln-tRNA(Gln) through the transamidation of misacylated Asp-tRNA(Asn) or Glu-tRNA(Gln) in organisms which lack either or both of asparaginyl-tRNA or glutaminyl-tRNA synthetases. The reaction takes place in the presence of glutamine and ATP through an activated phospho-Asp-tRNA(Asn) or phospho-Glu-tRNA(Gln). The polypeptide is Aspartyl/glutamyl-tRNA(Asn/Gln) amidotransferase subunit B (Clostridium beijerinckii (strain ATCC 51743 / NCIMB 8052) (Clostridium acetobutylicum)).